A 105-amino-acid chain; its full sequence is Small ribosomal subunit protein eS10B (105 aa).

This sequence belongs to the eukaryotic ribosomal protein eS10 family. In terms of assembly, component of the small ribosomal subunit (SSU). Mature yeast ribosomes consist of a small (40S) and a large (60S) subunit. The 40S small subunit contains 1 molecule of ribosomal RNA (18S rRNA) and 33 different proteins (encoded by 57 genes). The large 60S subunit contains 3 rRNA molecules (25S, 5.8S and 5S rRNA) and 46 different proteins (encoded by 81 genes). eS10 interacts with GCN1 (via middle region); this interaction is direct and promotes GCN2 kinase activity. Post-translationally, the N-terminus is not modified.

Its subcellular location is the cytoplasm. Its function is as follows. Component of the ribosome, a large ribonucleoprotein complex responsible for the synthesis of proteins in the cell. The small ribosomal subunit (SSU) binds messenger RNAs (mRNAs) and translates the encoded message by selecting cognate aminoacyl-transfer RNA (tRNA) molecules. The large subunit (LSU) contains the ribosomal catalytic site termed the peptidyl transferase center (PTC), which catalyzes the formation of peptide bonds, thereby polymerizing the amino acids delivered by tRNAs into a polypeptide chain. The nascent polypeptides leave the ribosome through a tunnel in the LSU and interact with protein factors that function in enzymatic processing, targeting, and the membrane insertion of nascent chains at the exit of the ribosomal tunnel. eS10 plays a role as a positive regulator of the GCN2 kinase activity by stimulating GCN1-mediated GCN2 activation. This is Small ribosomal subunit protein eS10B from Saccharomyces cerevisiae (strain ATCC 204508 / S288c) (Baker's yeast).